We begin with the raw amino-acid sequence, 735 residues long: NAD(P)H-quinone oxidoreductase subunit 5, chloroplastic (735 aa).

The next 16 membrane-spanning stretches (helical) occupy residues 9–29 (WIIPFVPLPIPILIGMGLLLF), 40–60 (WAFPNILLLSIVMIFSLDLSI), 89–109 (IDSLTSIMSILITTVGIFVLI), 125–145 (FAYMSLFNTSMLGLVTSCNLI), 147–167 (IYIFWELVGMCSYLLIGFWFT), 184–204 (IGDFGLLLGILGFYWITGSFE), 219–239 (NEVHFLFVTLCASLLFAGAVA), 258–278 (TPISALIHAATMVAAGIFLVA), 280–300 (LLPLFIVIPYIMNLISLIGII), 327–347 (LGYMMLALGMGSYRAALFHLI), 354–374 (ALLFLASGSIIHSMEAIVGYS), 396–416 (IAFLVGTLSLCGIPPLACFWS), 425–445 (WLYSPIFAIIAWSTAGLTAFY), 540–560 (LFPMLILLLFTLFVGAIAIPF), 600–620 (FSVSIACFGIFTAFLLYKPFY), and 714–734 (FYLLLYLVYVFIFLVISYFIL).

It belongs to the complex I subunit 5 family. In terms of assembly, NDH is composed of at least 16 different subunits, 5 of which are encoded in the nucleus.

It is found in the plastid. The protein localises to the chloroplast thylakoid membrane. The catalysed reaction is a plastoquinone + NADH + (n+1) H(+)(in) = a plastoquinol + NAD(+) + n H(+)(out). It carries out the reaction a plastoquinone + NADPH + (n+1) H(+)(in) = a plastoquinol + NADP(+) + n H(+)(out). NDH shuttles electrons from NAD(P)H:plastoquinone, via FMN and iron-sulfur (Fe-S) centers, to quinones in the photosynthetic chain and possibly in a chloroplast respiratory chain. The immediate electron acceptor for the enzyme in this species is believed to be plastoquinone. Couples the redox reaction to proton translocation, and thus conserves the redox energy in a proton gradient. The sequence is that of NAD(P)H-quinone oxidoreductase subunit 5, chloroplastic (ndhF) from Gossypium hirsutum (Upland cotton).